A 230-amino-acid chain; its full sequence is Putative 14-3-3-like protein GF14-H (230 aa).

The protein belongs to the 14-3-3 family.

Its function is as follows. Is associated with a DNA binding complex that binds to the G box, a well-characterized cis-acting DNA regulatory element found in plant genes. The protein is Putative 14-3-3-like protein GF14-H (GF14H) of Oryza sativa subsp. japonica (Rice).